The chain runs to 144 residues: 3-hydroxyacyl-[acyl-carrier-protein] dehydratase FabZ (144 aa).

His48 is a catalytic residue.

This sequence belongs to the thioester dehydratase family. FabZ subfamily.

It is found in the cytoplasm. The enzyme catalyses a (3R)-hydroxyacyl-[ACP] = a (2E)-enoyl-[ACP] + H2O. Functionally, involved in unsaturated fatty acids biosynthesis. Catalyzes the dehydration of short chain beta-hydroxyacyl-ACPs and long chain saturated and unsaturated beta-hydroxyacyl-ACPs. In Chloroflexus aggregans (strain MD-66 / DSM 9485), this protein is 3-hydroxyacyl-[acyl-carrier-protein] dehydratase FabZ.